The sequence spans 716 residues: Lamin-like protein (716 aa).

Composition is skewed to basic residues over residues 1-10 and 35-45; these read MDMSKKKSKR and KKTKTTTKKKA. Residues 1–107 are disordered; the sequence is MDMSKKKSKR…TIQSIPTTPI (107 aa). Residues 62-107 show a composition bias toward low complexity; sequence ITTTTTSTSTTNNNNITTTSTSSQQSNGTLSSSSSPTIQSIPTTPI. A coiled-coil region spans residues 130-450; it reads LREKDELSLI…KMRKQMADLK (321 aa). The IF rod domain maps to 132–515; that stretch reads EKDELSLIHN…ELVKGFEKTV (384 aa). Residues 519-522 carry the Nuclear localization signal motif; that stretch reads KRKR. The segment at 519–584 is disordered; the sequence is KRKRSKLQHE…PTGPEQSELF (66 aa). Residues 532–545 show a composition bias toward polar residues; sequence AANQDQNGMTIEEQ. A compositionally biased stretch (low complexity) spans 546-564; that stretch reads SSTSTTTTTSATGSSSSTS. Positions 565-584 are enriched in polar residues; sequence HLDNIDSSKLPTGPEQSELF. Residues 575-698 form the LTD domain; it reads PTGPEQSELF…EETTTVTLPA (124 aa). The short motif at 713 to 716 is the CAAX motif element; that stretch reads CLIM.

It belongs to the intermediate filament family. Homodimer. Lamin dimers then assemble into dimeric head-to-tail polymers. Ultimately, two head-to-tail polymers assemble laterally into a protofilament with a uniformly shaped rod of 3.5 nm in diameter.

Its subcellular location is the nucleus lamina. The protein localises to the nucleus envelope. It is found in the nucleus inner membrane. In terms of biological role, lamins are intermediate filament proteins that assemble into a filamentous meshwork, and which constitute the major components of the nuclear lamina, a fibrous layer on the nucleoplasmic side of the inner nuclear membrane. Lamins provide a framework for the nuclear envelope, bridging the nuclear envelope and chromatin, thereby playing an important role in nuclear assembly, chromatin organization, nuclear membrane and telomere dynamics. The structural integrity of the lamina is strictly controlled by the cell cycle, as seen by the disintegration and formation of the nuclear envelope in prophase and telophase, respectively. Helps to maintain integrity of nuclear structures in response to mechanical stress. The polypeptide is Lamin-like protein (Dictyostelium discoideum (Social amoeba)).